Here is a 151-residue protein sequence, read N- to C-terminus: tRNA-specific adenosine deaminase (151 aa).

The CMP/dCMP-type deaminase domain maps to 1 to 111 (MGKEYFLKVA…LDKKHGGVVS (111 aa)). Zn(2+) is bound at residue H52. The active-site Proton donor is the E54. Zn(2+) is bound by residues C82 and C85.

This sequence belongs to the cytidine and deoxycytidylate deaminase family. As to quaternary structure, homodimer. Requires Zn(2+) as cofactor.

The catalysed reaction is adenosine(34) in tRNA + H2O + H(+) = inosine(34) in tRNA + NH4(+). Catalyzes the deamination of adenosine to inosine at the wobble position 34 of tRNA(Arg2). This chain is tRNA-specific adenosine deaminase, found in Aquifex aeolicus (strain VF5).